The sequence spans 263 residues: Insulin-like growth factor-binding protein 1 (263 aa).

The signal sequence occupies residues 1 to 25 (MPEVLAVRAWPLLLSLAVQLGATVG). The IGFBP N-terminal domain maps to 28 to 109 (QPWRCAPCSA…TRGQGACMTT (82 aa)). 6 disulfides stabilise this stretch: Cys32-Cys59, Cys35-Cys61, Cys43-Cys62, Cys50-Cys65, Cys73-Cys86, and Cys80-Cys106. A disordered region spans residues 102–131 (GQGACMTTPSDEATDTKDTTSPENVSPESS). A phosphoserine mark is found at Ser122, Ser127, Ser130, Ser148, and Ser160. Residues 122 to 131 (SPENVSPESS) are compositionally biased toward polar residues. Tyr162 carries the post-translational modification Phosphotyrosine. The Thyroglobulin type-1 domain maps to 177–255 (KEPCQRELYK…SVAVRGDPKC (79 aa)). Intrachain disulfides connect Cys180–Cys210, Cys221–Cys232, and Cys234–Cys255. Phosphoserine is present on Ser246. The Cell attachment site signature appears at 250-252 (RGD).

In terms of assembly, binds equally well IGF1 and IGF2. Interacts with integrin ITGA5:ITGB1. Interacts with VHL; this interaction inhibits HIF1A degradation.

It localises to the secreted. In terms of biological role, multifunctional protein that plays a critical role in regulating the availability of IGFs such as IGF1 and IGF2 to their receptors and thereby regulates IGF-mediated cellular processes including cell migration, proliferation, differentiation or apoptosis in a cell-type specific manner. Also plays a positive role in cell migration by interacting with integrin ITGA5:ITGB1 through its RGD motif. Mechanistically, binding to integrins leads to activation of focal adhesion kinase/PTK2 and stimulation of the mitogen-activated protein kinase (MAPK) pathway. Regulates cardiomyocyte apoptosis by suppressing HIF-1alpha/HIF1A degradation through ubiquitination. The polypeptide is Insulin-like growth factor-binding protein 1 (IGFBP1) (Bos taurus (Bovine)).